The chain runs to 70 residues: UPF0519 protein D (70 aa).

Belongs to the UPF0519 family.

In Dictyostelium discoideum (Social amoeba), this protein is UPF0519 protein D.